A 511-amino-acid chain; its full sequence is MAIPKAHYSLAVLVLLFVVVSSSQKVCNPECKAKEPFHCDNTHAFNRTGFPRNFTFGAATSAYQIEGAAHRALNGWDYFTHRYPEKVPDRSSGDLACDSYDLYKDDVKLLKRMNVQAYRLSIAWSRVLPKGRLTGGVDENGITYYNNLINELKANGIEPYVTIFHWDVPQTLEDEYGGFLSTRIVEDYTNYAELLFQRFGDRVKFWITLNQPFSLATKGYGDGSYPPGRCTGCELGGDSGVEPYTVAHNQLLAHAKTVSLYRKRYQKFQGGKIGTTLIGRWFAPLNEFSELDKAAAKRAFDFFVGWFLDPLVYGKYPTIMREMVGDRLPEFTPEQSALVKGSLDFLGLNYYVTQYATDAPPPTQLNAITDARVTLGFYRNGVPIGVVAPSFVYYPPGFRQILNYIKDNYKNPLTYITENGVADLDLGNVTLATALADNGRIQNHCSHLSCLKCAMKDGCNVAGYFAWSLMDNYEFGNGYTLRFGMNWVNFTNPADRKEKASGKWFSKFLAK.

Residues Met-1–Ser-23 form the signal peptide. Cystine bridges form between Cys-31-Cys-450, Cys-39-Cys-445, and Cys-230-Cys-233. N-linked (GlcNAc...) asparagine glycosylation is found at Asn-46 and Asn-53. A beta-D-glucoside is bound by residues Gln-64, His-165, and Asn-210 to Gln-211. The a beta-D-glucoside site is built by Tyr-351 and Glu-418. Glu-418 serves as the catalytic Nucleophile. Asn-428 carries an N-linked (GlcNAc...) asparagine glycan. Residues Trp-467, Glu-474–Phe-475, and Phe-483 contribute to the a beta-D-glucoside site. Asn-489 carries N-linked (GlcNAc...) asparagine glycosylation.

It belongs to the glycosyl hydrolase 1 family. As to expression, specifically expressed in roots.

The enzyme catalyses a thioglucoside + H2O = a sugar + a thiol.. It catalyses the reaction Hydrolysis of terminal, non-reducing beta-D-glucosyl residues with release of beta-D-glucose.. Hydrolyzes sinigrin and, with lower efficiency, p-nitrophenyl beta-D-glucoside. This is Myrosinase 4 from Arabidopsis thaliana (Mouse-ear cress).